We begin with the raw amino-acid sequence, 99 residues long: MPSKLEGAMDALITVFHNYSGSEGDKYKLSKGELKELLNAELTDFLMSQKDPMLVEKIMNDLDSNKDNEVDFNEFVVLVAALTVACNDFFQEQQKKRSK.

2 EF-hand domains span residues 13–48 (ITVF…FLMS) and 50–85 (KDPM…LTVA). Ca(2+) is bound by residues S20, E23, D25, K28, E33, D63, N65, D67, E69, and E74.

This sequence belongs to the S-100 family. As to quaternary structure, homodimer. Homodimers may assemble into larger stable oligomers. In terms of tissue distribution, in larva at 5 days post-fertilization, shows very restricted expression only in a few large cells of the olfactory placode. More widely expressed in the adult. Expressed at higher levels in gut than in spleen, head kidney and gill.

The protein is Protein S100-Z of Danio rerio (Zebrafish).